The following is a 55-amino-acid chain: Small ribosomal subunit protein bS21 (55 aa).

Belongs to the bacterial ribosomal protein bS21 family.

This is Small ribosomal subunit protein bS21 from Ureaplasma parvum serovar 3 (strain ATCC 27815 / 27 / NCTC 11736).